Here is a 125-residue protein sequence, read N- to C-terminus: Large ribosomal subunit protein mL51 (125 aa).

The N-terminal 29 residues, 1 to 29 (MWSVQQLLWGCRSLLTQGCRSFSLGSRDL), are a transit peptide targeting the mitochondrion.

Belongs to the mitochondrion-specific ribosomal protein mL51 family. As to quaternary structure, component of the mitochondrial ribosome large subunit (39S) which comprises a 16S rRNA and about 50 distinct proteins.

The protein localises to the mitochondrion. The protein is Large ribosomal subunit protein mL51 (mrpl51) of Xenopus tropicalis (Western clawed frog).